The sequence spans 195 residues: MCFALSLSIYKHTGTPPNKCRLNSALKRNRATVRLDIGQRGSLCPPFSMSAVRPPVFIGLLLLILTTGYCKPRDRDETSLLELLMDRVRQTQEHHSEGNTQHPPQIIEHSLETKDVNKVTKSYQHERILEVFPRDLRQKDKFLKHLTGPLYFSPKCSKLFYKLYNNTRDCTIPAYYKRCARLLTRLAGSQRCTEG.

Intrachain disulfides connect Cys-156–Cys-192 and Cys-170–Cys-179.

Belongs to the ALKAL family. Homodimer. In terms of tissue distribution, highly expressed in the swim bladder and single cells of unknown identity in the head.

It is found in the secreted. The protein localises to the cell membrane. Functionally, cytokine that acts as a physiological ligand for receptor tyrosine kinases LTK and ALK. Required for neural crest cell differentiation and iridophore development during embryonic iridophore development and adult stripe development by acting as a receptor for LTK. Also required for iridophore formation in the adult eye. The polypeptide is ALK and LTK ligand 2b (Danio rerio (Zebrafish)).